The following is a 156-amino-acid chain: Small ribosomal subunit protein uS7 (156 aa).

This sequence belongs to the universal ribosomal protein uS7 family. As to quaternary structure, part of the 30S ribosomal subunit. Contacts proteins S9 and S11.

One of the primary rRNA binding proteins, it binds directly to 16S rRNA where it nucleates assembly of the head domain of the 30S subunit. Is located at the subunit interface close to the decoding center, probably blocks exit of the E-site tRNA. In Mesomycoplasma hyopneumoniae (strain 232) (Mycoplasma hyopneumoniae), this protein is Small ribosomal subunit protein uS7.